A 361-amino-acid chain; its full sequence is MKILVTGGAGFIGSAVVRHIINNTQDSVVNVDKLTYAGNLESLADVSDSERYAFEHADICDAVAMSRIFAQHQPDAVMHLAAESHVDRSITGPAAFIETNIVGTYVLLEAARNYWSALNDEKKKSFRFHHISTDEVYGDLPHPDEANNNEALPLFTETTAYAPSSPYSASKASSDHLVRAWKRTYGLPTIVTNCSNNYGPYHFPEKLIPLVILNALEGKALPIYGKGDQIRDWLYVEDHARALYTVVTEGKAGETYNIGGHNEKKNIDVVLTICDLLDEIVPKEKSYREQITYVADRPGHDRRYAIDADKISRELGWKPQETFESGIRKTVEWYLANTNWVENVKSGTYQSWIEQNYEGRQ.

Residues 11–12 (FI), 32–35 (DKLT), 58–59 (DI), 80–84 (LAAES), and T99 each bind NAD(+). S84 contacts substrate. Residue T133 participates in substrate binding. D134 functions as the Proton donor in the catalytic mechanism. Residues E135 and Y167 each act as proton acceptor in the active site. NAD(+) is bound at residue 167–171 (YSASK). Position 196 (N196) interacts with substrate. N197 contributes to the NAD(+) binding site. Residues 206-207 (KL), 222-224 (PIY), R231, N266, and 296-300 (DRPGH) each bind substrate.

The protein belongs to the NAD(P)-dependent epimerase/dehydratase family. dTDP-glucose dehydratase subfamily. In terms of assembly, homodimer. It depends on NAD(+) as a cofactor.

The catalysed reaction is dTDP-alpha-D-glucose = dTDP-4-dehydro-6-deoxy-alpha-D-glucose + H2O. Its pathway is carbohydrate biosynthesis; dTDP-L-rhamnose biosynthesis. It participates in bacterial outer membrane biogenesis; LPS O-antigen biosynthesis. Functionally, catalyzes the dehydration of dTDP-D-glucose to form dTDP-6-deoxy-D-xylo-4-hexulose via a three-step process involving oxidation, dehydration and reduction. The protein is dTDP-glucose 4,6-dehydratase (rfbB) of Shigella flexneri.